The chain runs to 303 residues: 4-diphosphocytidyl-2-C-methyl-D-erythritol kinase (303 aa).

The active site involves K18. 111–121 lines the ATP pocket; the sequence is PVASGIGGGSA. D153 is a catalytic residue.

The protein belongs to the GHMP kinase family. IspE subfamily.

The catalysed reaction is 4-CDP-2-C-methyl-D-erythritol + ATP = 4-CDP-2-C-methyl-D-erythritol 2-phosphate + ADP + H(+). Its pathway is isoprenoid biosynthesis; isopentenyl diphosphate biosynthesis via DXP pathway; isopentenyl diphosphate from 1-deoxy-D-xylulose 5-phosphate: step 3/6. Catalyzes the phosphorylation of the position 2 hydroxy group of 4-diphosphocytidyl-2C-methyl-D-erythritol. This chain is 4-diphosphocytidyl-2-C-methyl-D-erythritol kinase, found in Sinorhizobium medicae (strain WSM419) (Ensifer medicae).